The following is a 347-amino-acid chain: Rhodopsin (347 aa).

At 1–33 the chain is on the extracellular side; sequence TEGPDFYIPMVNTTGVVRSPYEYPQYYLVNPAA. The N-linked (GlcNAc...) asparagine glycan is linked to asparagine 12. A helical membrane pass occupies residues 34–58; it reads YAVLGAYMFFLIIVGFPINFLTLYV. At 59–70 the chain is on the cytoplasmic side; sequence TLEHKKLRTPLN. A helical transmembrane segment spans residues 71 to 93; that stretch reads YILLNLAVADLFMVIGGFTTTMY. Topologically, residues 94–107 are extracellular; that stretch reads SSMHGYFVLGRLGC. A disulfide bridge links cysteine 107 with cysteine 184. Residues 108–130 form a helical membrane-spanning segment; it reads NIEGFFATLGGMISLWSLAVLAI. The 'Ionic lock' involved in activated form stabilization signature appears at 131-133; it reads ERW. Over 131 to 149 the chain is Cytoplasmic; sequence ERWVVVCKPISNFRFGENH. The chain crosses the membrane as a helical span at residues 150-170; that stretch reads AIMGVSLTWVMALACTVPPLV. Over 171–199 the chain is Extracellular; that stretch reads GWSRYIPEGMQCACGIDYYTRAEGYNNES. An N-linked (GlcNAc...) asparagine glycan is attached at asparagine 197. The helical transmembrane segment at 200-221 threads the bilayer; the sequence is FVIYMFTFHFLFPMFIIFFCYG. Over 222 to 249 the chain is Cytoplasmic; the sequence is RLLCAVKEAAAAQQESETTQRAEREVTR. A helical transmembrane segment spans residues 250 to 271; the sequence is MVILMVIGYLVCWLPYASVAWF. The Extracellular segment spans residues 272 to 283; it reads IFTHKGSEFGPL. The chain crosses the membrane as a helical span at residues 284-305; the sequence is FMAVPSFFAKSSSIYNPIIYIC. An N6-(retinylidene)lysine modification is found at lysine 293. Residues 306 to 347 are Cytoplasmic-facing; sequence MNKQFRQCMITTLFCGKNPFEGQEEDSSTKTEASSASSVSPA. A lipid anchor (S-palmitoyl cysteine) is attached at cysteine 320. A disordered region spans residues 326–347; it reads EGQEEDSSTKTEASSASSVSPA. Positions 335–347 are enriched in low complexity; sequence KTEASSASSVSPA.

This sequence belongs to the G-protein coupled receptor 1 family. Opsin subfamily. Post-translationally, phosphorylated on some or all of the serine and threonine residues present in the C-terminal region. Contains one covalently linked retinal chromophore.

The protein localises to the membrane. It is found in the cell projection. It localises to the cilium. The protein resides in the photoreceptor outer segment. Photoreceptor required for image-forming vision at low light intensity. While most salt water fish species use retinal as chromophore, most freshwater fish use 3-dehydroretinal, or a mixture of retinal and 3-dehydroretinal. Light-induced isomerization of 11-cis to all-trans retinal triggers a conformational change that activates signaling via G-proteins. Subsequent receptor phosphorylation mediates displacement of the bound G-protein alpha subunit by arrestin and terminates signaling. This chain is Rhodopsin (rho), found in Sargocentron spiniferum (Sabre squirrelfish).